A 921-amino-acid polypeptide reads, in one-letter code: Collagen alpha-1(IX) chain (921 aa).

The signal sequence occupies residues 1–23 (MKNFWKISVFFCVCSCLGPWVSA). A nonhelical region (NC4) region spans residues 24–268 (TLKRRARFPA…ITTSQTTDER (245 aa)). Cystine bridges form between Cys-44/Cys-242 and Cys-198/Cys-252. One can recognise a Laminin G-like domain in the interval 50–244 (GQDDLPGFDL…LQWMLIHCDP (195 aa)). Asp-213, Asp-215, and His-253 together coordinate Zn(2+). Disordered stretches follow at residues 253-759 (HELP…APTD) and 783-921 (RPDT…GPDK). Collagen-like domains are found at residues 269–325 (GPPG…PGAD), 326–356 (GLTGPDGSPGSVGPRGQKGEPGVPGSRGFPG), 358–403 (GIPG…GTIG), 416–472 (PPGR…GLRG), 473–512 (ITGIVGDKGEKGARGFDGEPGPQGIPGAAGDQGQRGPPGE), 604–656 (GKPG…LPGP), 657–711 (PGLP…PGEP), and 712–755 (GLRG…PPGR). The tract at residues 269–405 (GPPGEQGPPG…PGPSGTIGFH (137 aa)) is triple-helical region (COL3). Composition is skewed to pro residues over residues 273 to 285 (EQGPPGPPGPPGV) and 298 to 310 (KGPPGPPGPPGDP). Residues 368 to 383 (TTGLPGELGRVGPIGD) are compositionally biased toward low complexity. Residues 387–398 (RGPPGPPGPPGP) are compositionally biased toward pro residues. Positions 406 to 417 (DGDPLCPNSCPP) are nonhelical region (NC3). A triple-helical region (COL2) region spans residues 418-756 (GRSGYPGLPG…PGIQGPPGRA (339 aa)). Basic and acidic residues predominate over residues 479–489 (DKGEKGARGFD). Composition is skewed to low complexity over residues 594-632 (PGKPGQLGSSGKPGQQGPPGEVGPRGPRGLPGSRGPVGP) and 639-650 (PGKLGSVGSPGL). Residues 757–786 (PTDQHIKQVCMRVVQEHFVEMAASLKRPDT) form a nonhelical region (NC2) region. Positions 787–901 (GASGLPGRPG…PGPPGPPGFC (115 aa)) are triple-helical region (COL1). The Collagen-like 9 domain maps to 790–847 (GLPGRPGPPGPPGPPGENGFPGQMGIRGLPGIKGPPGALGLRGPKGDLGEKGERGPPG). Residues 794-804 (RPGPPGPPGPP) show a composition bias toward pro residues. The segment covering 833–845 (PKGDLGEKGERGP) has biased composition (basic and acidic residues). Residues 888–900 (VPGPPGPPGPPGF) show a composition bias toward pro residues. Residues 902–921 (EPASCTLQSGQRAFSKGPDK) form a nonhelical region (NC1) region.

This sequence belongs to the fibril-associated collagens with interrupted helices (FACIT) family. In terms of assembly, heterotrimer of an alpha 1(IX), an alpha 2(IX) and an alpha 3(IX) chain. Covalently linked to the telopeptides of type II collagen by lysine-derived cross-links. Post-translationally, prolines at the third position of the tripeptide repeating unit (G-X-Y) are hydroxylated in some or all of the chains.

It localises to the secreted. Its subcellular location is the extracellular space. The protein localises to the extracellular matrix. Functionally, structural component of hyaline cartilage and vitreous of the eye. In Mus musculus (Mouse), this protein is Collagen alpha-1(IX) chain (Col9a1).